Here is a 136-residue protein sequence, read N- to C-terminus: Large ribosomal subunit protein uL16 (136 aa).

This sequence belongs to the universal ribosomal protein uL16 family. As to quaternary structure, part of the 50S ribosomal subunit.

Its function is as follows. Binds 23S rRNA and is also seen to make contacts with the A and possibly P site tRNAs. The sequence is that of Large ribosomal subunit protein uL16 from Ehrlichia canis (strain Jake).